Reading from the N-terminus, the 760-residue chain is General transcription and DNA repair factor IIH helicase subunit XPD (760 aa).

Residues 7–283 enclose the Helicase ATP-binding domain; sequence GLLVYFPYDY…KETDEQRLRD (277 aa). 42–49 is an ATP binding site; that stretch reads MPSGTGKT. The [4Fe-4S] cluster site is built by C116, C134, C155, and C190. The short motif at 234–237 is the DEAH box element; the sequence is DEAH. Positions 438 to 637 are mediates interaction with MMS19; that stretch reads MDASLAIKPV…TQSRILKARL (200 aa).

Belongs to the helicase family. RAD3/XPD subfamily. As to quaternary structure, component of the 7-subunit TFIIH core complex composed of XPB/ERCC3, XPD/ERCC2, GTF2H1, GTF2H2, GTF2H3, GTF2H4 and GTF2H5, which is active in NER. The core complex associates with the 3-subunit CDK-activating kinase (CAK) module composed of CCNH/cyclin H, CDK7 and MNAT1 to form the 10-subunit holoenzyme (holo-TFIIH) active in transcription. The interaction with GTF2H2 results in the stimulation of the 5'--&gt;3' helicase activity. Component of the MMXD complex, which includes CIAO1, ERCC2, CIAO2B, MMS19 and SLC25A5. Interacts with CIAO1 and CIAO2B; the interaction WITH CIAO2B is direct. Interacts with ATF7IP. Interacts directly with MMS19. Part of TBP-based Pol II pre-initiation complex (PIC), in which Pol II core assembles with general transcription factors and other specific initiation factors including GTF2E1, GTF2E2, GTF2F1, GTF2F2, TCEA1, ERCC2, ERCC3, GTF2H2, GTF2H3, GTF2H4, GTF2H5, GTF2A1, GTF2A2, GTF2B and TBP; this large multi-subunit PIC complex mediates DNA unwinding and targets Pol II core to the transcription start site where the first phosphodiester bond forms. Requires Mg(2+) as cofactor. [4Fe-4S] cluster serves as cofactor. Post-translationally, ISGylated.

It localises to the nucleus. The protein resides in the cytoplasm. Its subcellular location is the cytoskeleton. The protein localises to the spindle. It carries out the reaction Couples ATP hydrolysis with the unwinding of duplex DNA at the replication fork by translocating in the 5'-3' direction. This creates two antiparallel DNA single strands (ssDNA). The leading ssDNA polymer is the template for DNA polymerase III holoenzyme which synthesizes a continuous strand.. The catalysed reaction is ATP + H2O = ADP + phosphate + H(+). Functionally, ATP-dependent 5'-3' DNA helicase, component of the general transcription and DNA repair factor IIH (TFIIH) core complex, which is involved in general and transcription-coupled nucleotide excision repair (NER) of damaged DNA and, when complexed to CDK-activating kinase (CAK), involved in transcription by RNA polymerase II. In NER, TFIIH acts by opening DNA around the lesion to allow the excision of the damaged oligonucleotide and its replacement by a new DNA fragment. The ATP-dependent helicase activity of XPD/ERCC2 is required for DNA opening. In transcription, TFIIH has an essential role in transcription initiation. When the pre-initiation complex (PIC) has been established, TFIIH is required for promoter opening and promoter escape. Phosphorylation of the C-terminal tail (CTD) of the largest subunit of RNA polymerase II by the kinase module CAK controls the initiation of transcription. XPD/ERCC2 acts by forming a bridge between CAK and the core-TFIIH complex. Involved in the regulation of vitamin-D receptor activity. As part of the mitotic spindle-associated MMXD complex it plays a role in chromosome segregation. Might have a role in aging process and could play a causative role in the generation of skin cancers. In Mus musculus (Mouse), this protein is General transcription and DNA repair factor IIH helicase subunit XPD (Ercc2).